We begin with the raw amino-acid sequence, 449 residues long: tRNA-2-methylthio-N(6)-dimethylallyladenosine synthase (449 aa).

One can recognise an MTTase N-terminal domain in the interval 3–124 (KMLYIKTYGC…LPTMLEKLDS (122 aa)). Residues C12, C48, C87, C163, C167, and C170 each coordinate [4Fe-4S] cluster. One can recognise a Radical SAM core domain in the interval 149–380 (KSPTVSGLVS…QAQLMQQQLE (232 aa)). In terms of domain architecture, TRAM spans 383–447 (QKLIGKVVPV…ASSLFGEVYA (65 aa)).

This sequence belongs to the methylthiotransferase family. MiaB subfamily. Monomer. [4Fe-4S] cluster serves as cofactor.

The protein localises to the cytoplasm. The catalysed reaction is N(6)-dimethylallyladenosine(37) in tRNA + (sulfur carrier)-SH + AH2 + 2 S-adenosyl-L-methionine = 2-methylsulfanyl-N(6)-dimethylallyladenosine(37) in tRNA + (sulfur carrier)-H + 5'-deoxyadenosine + L-methionine + A + S-adenosyl-L-homocysteine + 2 H(+). Its function is as follows. Catalyzes the methylthiolation of N6-(dimethylallyl)adenosine (i(6)A), leading to the formation of 2-methylthio-N6-(dimethylallyl)adenosine (ms(2)i(6)A) at position 37 in tRNAs that read codons beginning with uridine. In Orientia tsutsugamushi (strain Ikeda) (Rickettsia tsutsugamushi), this protein is tRNA-2-methylthio-N(6)-dimethylallyladenosine synthase.